A 189-amino-acid polypeptide reads, in one-letter code: Peptide deformylase (189 aa).

The Fe cation site is built by Cys98 and His140. Glu141 is a catalytic residue. Fe cation is bound at residue His144.

The protein belongs to the polypeptide deformylase family. It depends on Fe(2+) as a cofactor.

It carries out the reaction N-terminal N-formyl-L-methionyl-[peptide] + H2O = N-terminal L-methionyl-[peptide] + formate. Its function is as follows. Removes the formyl group from the N-terminal Met of newly synthesized proteins. Requires at least a dipeptide for an efficient rate of reaction. N-terminal L-methionine is a prerequisite for activity but the enzyme has broad specificity at other positions. The protein is Peptide deformylase of Porphyromonas gingivalis (strain ATCC 33277 / DSM 20709 / CIP 103683 / JCM 12257 / NCTC 11834 / 2561).